We begin with the raw amino-acid sequence, 499 residues long: U4/U6 small nuclear ribonucleoprotein Prp31 (499 aa).

The disordered stretch occupies residues 1 to 37; the sequence is MSLADELLADLEEAAEEEEGGSYGEEEEEPAIEDVQE. Residues 7–37 are compositionally biased toward acidic residues; sequence LLADLEEAAEEEEGGSYGEEEEEPAIEDVQE. Coiled-coil stretches lie at residues 85 to 120 and 181 to 215; these read EAAP…KYSK and EEEL…MSFI. The Nop domain maps to 215–333; the sequence is IAPNLSIIIG…IERKFDKWQE (119 aa). The disordered stretch occupies residues 334 to 357; it reads PPPVKQVKPLPAPLDGQRKKRGGR. Positions 351–364 match the Nuclear localization signal (NLS) motif; sequence RKKRGGRRYRKMKE. 3 positions are modified to phosphoserine: Ser-379, Ser-395, and Ser-432. Lys-438 is modified (N6-acetyllysine). A Phosphoserine modification is found at Ser-439. Thr-440 carries the phosphothreonine modification. Residue Ser-450 is modified to Phosphoserine. Thr-455 is modified (phosphothreonine). Glycyl lysine isopeptide (Lys-Gly) (interchain with G-Cter in SUMO2) cross-links involve residues Lys-471 and Lys-478.

It belongs to the PRP31 family. As to quaternary structure, identified in the spliceosome B complex. Component of the U4/U6-U5 tri-snRNP complex composed of the U4, U6 and U5 snRNAs and at least PRPF3, PRPF4, PRPF6, PRPF8, PRPF31, SNRNP200, TXNL4A, SNRNP40, DDX23, CD2BP2, PPIH, SNU13, EFTUD2, SART1 and USP39. Interacts with a complex formed by SNU13 and U4 snRNA, but not with SNU13 or U4 snRNA alone. The complex formed by SNU13 and PRPF31 also binds U4atac snRNA, a characteristic component of specific, less abundant spliceosomal complexes. Interacts with PRPF6/U5 snRNP-associated 102 kDa protein. Component of some MLL1/MLL complex, at least composed of the core components KMT2A/MLL1, ASH2L, HCFC1/HCF1, WDR5 and RBBP5, as well as the facultative components BACC1, CHD8, E2F6, HSP70, INO80C, KANSL1, LAS1L, MAX, MCRS1, MGA, KAT8/MOF, PELP1, PHF20, PRP31, RING2, RUVB1/TIP49A, RUVB2/TIP49B, SENP3, TAF1, TAF4, TAF6, TAF7, TAF9 and TEX10. Interacts (via its NLS) with CTNNBL1. Interacts with USH1G. In terms of processing, phosphorylated by PRP4K during spliceosome assembly. In terms of tissue distribution, ubiquitously expressed.

Its subcellular location is the nucleus. It is found in the nucleus speckle. The protein localises to the cajal body. Involved in pre-mRNA splicing as component of the spliceosome. Required for the assembly of the U4/U5/U6 tri-snRNP complex, one of the building blocks of the spliceosome. In Homo sapiens (Human), this protein is U4/U6 small nuclear ribonucleoprotein Prp31.